The primary structure comprises 436 residues: Serine protease hepsin (436 aa).

Residues 1–29 are disordered; that stretch reads MAKEDEEPGAHRGGSTCSRPQPGKGGRTA. Topologically, residues 1–38 are cytoplasmic; that stretch reads MAKEDEEPGAHRGGSTCSRPQPGKGGRTAACCSRPKVA. A helical; Signal-anchor for type II membrane protein transmembrane segment spans residues 39–59; sequence ALIVGTLLFLTGIGAASWAIV. The Extracellular portion of the chain corresponds to 60-436; that stretch reads TILLQSDQEP…SEASGMVTQP (377 aa). The SRCR domain maps to 73-170; that stretch reads VQLSPGDSRL…RGRFLTATCQ (98 aa). 8 cysteine pairs are disulfide-bonded: cysteine 96–cysteine 159, cysteine 109–cysteine 169, cysteine 138–cysteine 157, cysteine 172–cysteine 296, cysteine 207–cysteine 223, cysteine 310–cysteine 378, cysteine 341–cysteine 357, and cysteine 368–cysteine 400. An N-linked (GlcNAc...) asparagine glycan is attached at asparagine 131. Residues 182-424 form the Peptidase S1 domain; that stretch reads IVGGQDSSLG…FREWIFKAIK (243 aa). Residues histidine 222 and aspartate 276 each act as charge relay system in the active site. The active-site Charge relay system is serine 372.

It belongs to the peptidase S1 family. As to expression, detected in kidney, in thick ascending tubule epithelial cells (at protein level). Detected in kidney and liver.

The protein localises to the apical cell membrane. It is found in the cell membrane. It localises to the secreted. The enzyme catalyses Cleavage after basic amino-acid residues, with Arg strongly preferred to Lys.. Serine protease that cleaves extracellular substrates, and contributes to the proteolytic processing of growth factors, such as HGF and MST1/HGFL. Plays a role in cell growth and maintenance of cell morphology. Plays a role in the proteolytic processing of ACE2. Mediates the proteolytic cleavage of urinary UMOD that is required for UMOD polymerization. The protein is Serine protease hepsin (Hpn) of Mus musculus (Mouse).